A 315-amino-acid polypeptide reads, in one-letter code: Methionyl-tRNA formyltransferase (315 aa).

113 to 116 (SLLP) provides a ligand contact to (6S)-5,6,7,8-tetrahydrofolate.

The protein belongs to the Fmt family.

The enzyme catalyses L-methionyl-tRNA(fMet) + (6R)-10-formyltetrahydrofolate = N-formyl-L-methionyl-tRNA(fMet) + (6S)-5,6,7,8-tetrahydrofolate + H(+). In terms of biological role, attaches a formyl group to the free amino group of methionyl-tRNA(fMet). The formyl group appears to play a dual role in the initiator identity of N-formylmethionyl-tRNA by promoting its recognition by IF2 and preventing the misappropriation of this tRNA by the elongation apparatus. The polypeptide is Methionyl-tRNA formyltransferase (Enterobacter sp. (strain 638)).